The following is a 424-amino-acid chain: MMTDPLSRSHAAALDAADPLRALRDAFVFPQHGGQDQTYFVGNSLGLQPRQARAMVSEVLDQWGALAVEGHFTGPTQWLTYHQLVRDGLARVVGAQPDEVVAMNTLTVNLHLMMASFYRPSAERAAILIEAGAFPSDRHAVESQLRLHGLDPDTHLIEVEPDAADGTLSMDAIAAAIAQHGPRLALVLWPGIQYRTGQAFALGEIARLARAQGAAVGFDLAHAVGNIPLSLHDDGVDFAVWCHYKYLNAGPGAVGGCFVHARHAHSNLPRMAGWWGHEQPTRFRMEPQFVPSPGAEGWQLSNPPVLALAPLRASLELFDQAGMPALRAKSEQLTGHLEQLIHTRVPQVLQIVTPADPAQRGCQLSLRVAGGRTQGRALFEYLQSVGVLGDWREPDVIRIAPVPLYNRFCDLHQLVEHVETWAAA.

Pyridoxal 5'-phosphate-binding positions include Leu-106, Thr-107, 134 to 137 (FPSD), Asp-219, His-222, and Tyr-244. Lys-245 carries the post-translational modification N6-(pyridoxal phosphate)lysine. Pyridoxal 5'-phosphate is bound by residues Trp-274 and Asn-302.

It belongs to the kynureninase family. Homodimer. Requires pyridoxal 5'-phosphate as cofactor.

The enzyme catalyses L-kynurenine + H2O = anthranilate + L-alanine + H(+). The catalysed reaction is 3-hydroxy-L-kynurenine + H2O = 3-hydroxyanthranilate + L-alanine + H(+). It participates in amino-acid degradation; L-kynurenine degradation; L-alanine and anthranilate from L-kynurenine: step 1/1. The protein operates within cofactor biosynthesis; NAD(+) biosynthesis; quinolinate from L-kynurenine: step 2/3. Catalyzes the cleavage of L-kynurenine (L-Kyn) and L-3-hydroxykynurenine (L-3OHKyn) into anthranilic acid (AA) and 3-hydroxyanthranilic acid (3-OHAA), respectively. The polypeptide is Kynureninase (Xanthomonas campestris pv. campestris (strain B100)).